A 341-amino-acid polypeptide reads, in one-letter code: tRNA N6-adenosine threonylcarbamoyltransferase (341 aa).

His-111 and His-115 together coordinate Fe cation. Residues 134-138 (LVSGG), Asp-167, Gly-180, and Asn-276 each bind substrate. Asp-304 is a Fe cation binding site.

Belongs to the KAE1 / TsaD family. The cofactor is Fe(2+).

It localises to the cytoplasm. The enzyme catalyses L-threonylcarbamoyladenylate + adenosine(37) in tRNA = N(6)-L-threonylcarbamoyladenosine(37) in tRNA + AMP + H(+). In terms of biological role, required for the formation of a threonylcarbamoyl group on adenosine at position 37 (t(6)A37) in tRNAs that read codons beginning with adenine. Is involved in the transfer of the threonylcarbamoyl moiety of threonylcarbamoyl-AMP (TC-AMP) to the N6 group of A37, together with TsaE and TsaB. TsaD likely plays a direct catalytic role in this reaction. This chain is tRNA N6-adenosine threonylcarbamoyltransferase, found in Pseudomonas aeruginosa (strain ATCC 15692 / DSM 22644 / CIP 104116 / JCM 14847 / LMG 12228 / 1C / PRS 101 / PAO1).